Here is a 667-residue protein sequence, read N- to C-terminus: DNA ligase (667 aa).

NAD(+) contacts are provided by residues 32–36 (DSEYD), 81–82 (SL), and glutamate 110. Lysine 112 acts as the N6-AMP-lysine intermediate in catalysis. NAD(+)-binding residues include arginine 133, glutamate 167, lysine 283, and lysine 307. Residues cysteine 401, cysteine 404, cysteine 419, and cysteine 424 each coordinate Zn(2+). Residues 586-667 (EGHPEFSGKT…FVDKQNELNS (82 aa)) form the BRCT domain.

The protein belongs to the NAD-dependent DNA ligase family. LigA subfamily. It depends on Mg(2+) as a cofactor. Mn(2+) is required as a cofactor.

It catalyses the reaction NAD(+) + (deoxyribonucleotide)n-3'-hydroxyl + 5'-phospho-(deoxyribonucleotide)m = (deoxyribonucleotide)n+m + AMP + beta-nicotinamide D-nucleotide.. Its function is as follows. DNA ligase that catalyzes the formation of phosphodiester linkages between 5'-phosphoryl and 3'-hydroxyl groups in double-stranded DNA using NAD as a coenzyme and as the energy source for the reaction. It is essential for DNA replication and repair of damaged DNA. This is DNA ligase from Staphylococcus aureus (strain bovine RF122 / ET3-1).